The sequence spans 371 residues: 4-hydroxy-3-methylbut-2-en-1-yl diphosphate synthase (flavodoxin) (371 aa).

Cys-272, Cys-275, Cys-307, and Glu-314 together coordinate [4Fe-4S] cluster.

It belongs to the IspG family. The cofactor is [4Fe-4S] cluster.

It carries out the reaction (2E)-4-hydroxy-3-methylbut-2-enyl diphosphate + oxidized [flavodoxin] + H2O + 2 H(+) = 2-C-methyl-D-erythritol 2,4-cyclic diphosphate + reduced [flavodoxin]. Its pathway is isoprenoid biosynthesis; isopentenyl diphosphate biosynthesis via DXP pathway; isopentenyl diphosphate from 1-deoxy-D-xylulose 5-phosphate: step 5/6. Functionally, converts 2C-methyl-D-erythritol 2,4-cyclodiphosphate (ME-2,4cPP) into 1-hydroxy-2-methyl-2-(E)-butenyl 4-diphosphate. This is 4-hydroxy-3-methylbut-2-en-1-yl diphosphate synthase (flavodoxin) from Pseudomonas paraeruginosa (strain DSM 24068 / PA7) (Pseudomonas aeruginosa (strain PA7)).